Reading from the N-terminus, the 283-residue chain is Nopaline-binding periplasmic protein (283 aa).

The signal sequence occupies residues 1–25 (MKFFNLNALAAVVTGVLLAAGPTQA). An intrachain disulfide couples C63 to C70.

This sequence belongs to the bacterial solute-binding protein 3 family.

The protein localises to the periplasm. Functionally, component of the nopaline active transport system probably consisting of four subunits: Q, M, P and T. This system is also capable of transporting octopine provided that catabolic functions are induced with nopaline. This is Nopaline-binding periplasmic protein (nocT) from Agrobacterium fabrum (strain C58 / ATCC 33970) (Agrobacterium tumefaciens (strain C58)).